Consider the following 368-residue polypeptide: 3-dehydroquinate synthase (368 aa).

Residues 71–76, 105–109, 129–130, Lys142, and Lys151 each bind NAD(+); these read DGEAAK, GATTD, and TT. Glu184, His247, and His263 together coordinate Zn(2+).

Belongs to the sugar phosphate cyclases superfamily. Dehydroquinate synthase family. Co(2+) serves as cofactor. Zn(2+) is required as a cofactor. Requires NAD(+) as cofactor.

Its subcellular location is the cytoplasm. The catalysed reaction is 7-phospho-2-dehydro-3-deoxy-D-arabino-heptonate = 3-dehydroquinate + phosphate. Its pathway is metabolic intermediate biosynthesis; chorismate biosynthesis; chorismate from D-erythrose 4-phosphate and phosphoenolpyruvate: step 2/7. Catalyzes the conversion of 3-deoxy-D-arabino-heptulosonate 7-phosphate (DAHP) to dehydroquinate (DHQ). This is 3-dehydroquinate synthase from Thermobifida fusca (strain YX).